Consider the following 68-residue polypeptide: Large ribosomal subunit protein bL31 (68 aa).

Positions 16, 18, 38, and 41 each coordinate Zn(2+).

This sequence belongs to the bacterial ribosomal protein bL31 family. Type A subfamily. As to quaternary structure, part of the 50S ribosomal subunit. The cofactor is Zn(2+).

Functionally, binds the 23S rRNA. This is Large ribosomal subunit protein bL31 from Thiobacillus denitrificans (strain ATCC 25259 / T1).